The sequence spans 127 residues: UPF0102 protein NFA_41430 (127 aa).

Belongs to the UPF0102 family.

The chain is UPF0102 protein NFA_41430 from Nocardia farcinica (strain IFM 10152).